A 406-amino-acid chain; its full sequence is Phosphoglycerate kinase (406 aa).

Substrate contacts are provided by residues 23–25 (DIN), Arg38, 61–64 (HQGR), Arg117, and Arg157. Residues Glu331 and 357–360 (GGHI) each bind ATP.

Belongs to the phosphoglycerate kinase family. As to quaternary structure, monomer.

It is found in the cytoplasm. It carries out the reaction (2R)-3-phosphoglycerate + ATP = (2R)-3-phospho-glyceroyl phosphate + ADP. It functions in the pathway carbohydrate degradation; glycolysis; pyruvate from D-glyceraldehyde 3-phosphate: step 2/5. The protein is Phosphoglycerate kinase of Methanopyrus kandleri (strain AV19 / DSM 6324 / JCM 9639 / NBRC 100938).